The chain runs to 211 residues: Thymidylate kinase (211 aa).

Position 10-17 (10-17) interacts with ATP; sequence GVEGCGKT.

This sequence belongs to the thymidylate kinase family.

It carries out the reaction dTMP + ATP = dTDP + ADP. Functionally, phosphorylation of dTMP to form dTDP in both de novo and salvage pathways of dTTP synthesis. The protein is Thymidylate kinase of Trichormus variabilis (strain ATCC 29413 / PCC 7937) (Anabaena variabilis).